We begin with the raw amino-acid sequence, 861 residues long: ToMV resistant protein Tm-2 netted virescent (861 aa).

Residues 63-83 are a coiled coil; it reads VKNLLKDIQELAGDVEDLLDD. The region spanning 162–388 is the NB-ARC domain; the sequence is DDFNMLQAKL…LESMGHKVQD (227 aa). 185–192 lines the ATP pocket; that stretch reads GMPGLGKT. 13 LRR repeats span residues 225 to 248, 305 to 327, 388 to 411, 449 to 472, 510 to 536, 585 to 608, 609 to 631, 652 to 680, 689 to 710, 712 to 735, 736 to 758, 784 to 807, and 810 to 835; these read LDIA…NLRS, LHAL…IFNF, DGCA…CFLY, LAED…TYNG, VARL…KLEK, MTCL…IVKL, TRLE…VWES, ISSF…FFEP, LRKL…IFSP, LKAL…LSSY, PHIA…SFPP, LRKL…EANG, and FPQL…DVSM.

Belongs to the disease resistance NB-LRR family. As to quaternary structure, (Microbial infection) Interacts with tobamoviruses mouvement protein at the plasma membrane; this interaction triggers defense responses leading to programmed cell death. In terms of assembly, binds to HSP90 proteins; this interaction seems required for defense responses toward tobamoviruses.

The protein resides in the cell membrane. In terms of biological role, inhibitor of viral mouvements which confers resistance to some tobamoviruses including tomato mosaic virus (ToMV) (e.g. isolate L and W3) and tobacco mosaic virus (TMV), but not to resistance-breaking isolates (e.g. Ltbl) ToMV and tomato brown rugose fruit virus (ToBRFV). Elicits a hypersensitive reaction in response to avirulent (Avr) movement proteins from resistance inducing tobamoviruses (e.g. ToMV and TMV) strains, thus leading to programmed cell death. In Solanum lycopersicum (Tomato), this protein is ToMV resistant protein Tm-2 netted virescent.